Here is a 403-residue protein sequence, read N- to C-terminus: Ribosomal RNA large subunit methyltransferase I (403 aa).

Residues 9–88 enclose the PUA domain; sequence YPRLVLSKGR…ESIDIAFFTR (80 aa).

It belongs to the methyltransferase superfamily. RlmI family.

It localises to the cytoplasm. The enzyme catalyses cytidine(1962) in 23S rRNA + S-adenosyl-L-methionine = 5-methylcytidine(1962) in 23S rRNA + S-adenosyl-L-homocysteine + H(+). Its function is as follows. Specifically methylates the cytosine at position 1962 (m5C1962) of 23S rRNA. This chain is Ribosomal RNA large subunit methyltransferase I, found in Salmonella paratyphi A (strain ATCC 9150 / SARB42).